The sequence spans 182 residues: Bis(5'-nucleosyl)-tetraphosphatase [asymmetrical] (182 aa).

An HIT domain is found at 3-110 (KQLYFSKFPV…IPRKKADFSE (108 aa)). Residues Asn-28, Gln-84, and 90–93 (GQTV) each bind substrate. Residues 95-99 (HVHVH) carry the Histidine triad motif motif. His-97 (tele-AMP-histidine intermediate) is an active-site residue. Residue His-99 coordinates substrate. The interval 135–161 (RYAGDERPPTSMRQAIPKDEDRKPRTL) is disordered. The span at 150–161 (IPKDEDRKPRTL) shows a compositional bias: basic and acidic residues.

It catalyses the reaction P(1),P(4)-bis(5'-guanosyl) tetraphosphate + H2O = GMP + GTP + 2 H(+). Its function is as follows. Asymmetrically hydrolyzes Ap4A to yield AMP and ATP. In Schizosaccharomyces pombe (strain 972 / ATCC 24843) (Fission yeast), this protein is Bis(5'-nucleosyl)-tetraphosphatase [asymmetrical] (aph1).